We begin with the raw amino-acid sequence, 876 residues long: DNA mismatch repair protein MutS (876 aa).

628-635 provides a ligand contact to ATP; sequence GPNMAGKS.

Belongs to the DNA mismatch repair MutS family.

This protein is involved in the repair of mismatches in DNA. It is possible that it carries out the mismatch recognition step. This protein has a weak ATPase activity. The protein is DNA mismatch repair protein MutS of Chlorobaculum parvum (strain DSM 263 / NCIMB 8327) (Chlorobium vibrioforme subsp. thiosulfatophilum).